A 319-amino-acid polypeptide reads, in one-letter code: MPDAAAAAAAAQDADAVMRDAPADAAAGGGDNDDDDGDDGTEEDEEEDDDEEGDEEELPPAEDPAAPEPVSALLPGSPNQLTLLFQGEVYVFESVTPEKVQAVLLLLGRSEMPPGLANMVLPNQRENRGYDDLLQRTDIPAKRVASLIRFREKRKERNFDKKIRYAVRKEVALRMQRRKGQFAGRANMEGESLSPGCELASQGSGQDFLSRESKCQNCGTSEKMTPAMRRGPAGPRTLCNACGLMWANKGTLRNCPKAKVESSVVATEQSNAAVSPSGIDNKELVVPNPENITASHGEVMGDSTPANEAEIGAPKAQSQ.

Positions 1–15 (MPDAAAAAAAAQDAD) are enriched in low complexity. The segment at 1 to 74 (MPDAAAAAAA…AAPEPVSALL (74 aa)) is disordered. A compositionally biased stretch (acidic residues) spans 31-60 (DNDDDDGDDGTEEDEEEDDDEEGDEEELPP). Residues 74 to 109 (LPGSPNQLTLLFQGEVYVFESVTPEKVQAVLLLLGR) form the Tify domain. The region spanning 143 to 185 (RVASLIRFREKRKERNFDKKIRYAVRKEVALRMQRRKGQFAGR) is the CCT domain. The GATA-type zinc finger occupies 215–242 (CQNCGTSEKMTPAMRRGPAGPRTLCNAC). A disordered region spans residues 292–319 (ITASHGEVMGDSTPANEAEIGAPKAQSQ).

Belongs to the type IV zinc-finger family. Class C subfamily.

The protein resides in the nucleus. Transcriptional activator that specifically binds 5'-GATA-3' or 5'-GAT-3' motifs within gene promoters. This is GATA transcription factor 18 from Oryza sativa subsp. japonica (Rice).